Here is a 550-residue protein sequence, read N- to C-terminus: Pectinesterase 2.1 (550 aa).

Residue N179 is glycosylated (N-linked (GlcNAc...) asparagine). 2 residues coordinate substrate: T312 and Q342. A disulfide bridge links C331 with C358. The active-site Proton donor is D365. The active-site Nucleophile is D386. Cysteines 399 and 433 form a disulfide. The substrate site is built by R454 and W456.

In the N-terminal section; belongs to the PMEI family. It in the C-terminal section; belongs to the pectinesterase family.

It localises to the secreted. The protein localises to the cell wall. The enzyme catalyses [(1-&gt;4)-alpha-D-galacturonosyl methyl ester](n) + n H2O = [(1-&gt;4)-alpha-D-galacturonosyl](n) + n methanol + n H(+). The protein operates within glycan metabolism; pectin degradation; 2-dehydro-3-deoxy-D-gluconate from pectin: step 1/5. Pectinesterase may play a role in cell wall metabolism during fruit growth and development prior to ripening and may be required for preparing cell walls for softening by polygalacturonase during fruit ripening. In Solanum lycopersicum (Tomato), this protein is Pectinesterase 2.1 (PME2.1).